Consider the following 316-residue polypeptide: Putative HTH-type transcriptional regulatory protein PYRAB03670 (316 aa).

The HTH cro/C1-type domain maps to 131–189; it reads LKDLREKHGYSLSELANILGVSRKSLQRYEKGDSMVTLEVALRLEEVFDEALVKPINVL. The H-T-H motif DNA-binding region spans 142 to 161; the sequence is LSELANILGVSRKSLQRYEK.

The protein is Putative HTH-type transcriptional regulatory protein PYRAB03670 of Pyrococcus abyssi (strain GE5 / Orsay).